The following is a 152-amino-acid chain: Deoxyuridine 5'-triphosphate nucleotidohydrolase (152 aa).

Substrate contacts are provided by residues 72-74 (RSG), Asn85, and 89-91 (TID).

The protein belongs to the dUTPase family. It depends on Mg(2+) as a cofactor.

It catalyses the reaction dUTP + H2O = dUMP + diphosphate + H(+). Its pathway is pyrimidine metabolism; dUMP biosynthesis; dUMP from dCTP (dUTP route): step 2/2. Functionally, this enzyme is involved in nucleotide metabolism: it produces dUMP, the immediate precursor of thymidine nucleotides and it decreases the intracellular concentration of dUTP so that uracil cannot be incorporated into DNA. This is Deoxyuridine 5'-triphosphate nucleotidohydrolase from Afipia carboxidovorans (strain ATCC 49405 / DSM 1227 / KCTC 32145 / OM5) (Oligotropha carboxidovorans).